The sequence spans 284 residues: Aldo-keto reductase MAV_3816 (284 aa).

Residue Y59 is the Proton donor of the active site. Residues L199, I237, R239, S240, A241, S248, and R275 each coordinate NADPH.

It belongs to the aldo/keto reductase family.

The sequence is that of Aldo-keto reductase MAV_3816 from Mycobacterium avium (strain 104).